The following is a 482-amino-acid chain: 3-isopropylmalate dehydratase large subunit (482 aa).

The [4Fe-4S] cluster site is built by Cys-353, Cys-414, and Cys-417.

It belongs to the aconitase/IPM isomerase family. LeuC type 1 subfamily. As to quaternary structure, heterodimer of LeuC and LeuD. Requires [4Fe-4S] cluster as cofactor.

The catalysed reaction is (2R,3S)-3-isopropylmalate = (2S)-2-isopropylmalate. It participates in amino-acid biosynthesis; L-leucine biosynthesis; L-leucine from 3-methyl-2-oxobutanoate: step 2/4. Catalyzes the isomerization between 2-isopropylmalate and 3-isopropylmalate, via the formation of 2-isopropylmaleate. The polypeptide is 3-isopropylmalate dehydratase large subunit (Xanthomonas oryzae pv. oryzae (strain MAFF 311018)).